The chain runs to 445 residues: MSDIYYQLPVEIWLQIIFFSDNINLLFVDKNFFGLIKLINDKKPIIKKIINQNYFDVLRYAIKNCIGIFGDNFMEDCLRQSFYDGQLYIADYLVDKGADIYSMGNLYFITTNETENHNNFRYVDGLNVLQGKFNKKTGFYVHKPETICQYLNHNIYLRDVYLPKGKTGFKKFKLENYYVANMIVLGKQRNLIDLDTWKYMIYHGTIITEGVIEYCRINKCTKIVDYLLDCLIETNHNIDIYTACKNGYTKLAIHYIKNSIICREIRYYIMSRGTYWTDNKSENINHEHIANLATQNGHIEILKYLVEEKYELVGNLYIIMFLACQYGHLEIIKYLVELGVDIRQGLDAFIYLLWQGSYFNILKYLLTVDSDIINIINKVDYNGWFKMYLKDPLSIDSNHYIHPYTISELKCRINSPICKPIYYLRNKSIGTIDFDDFNDIDGFND.

ANK repeat units follow at residues 73–102 (FMED…DIYS), 285–314 (NHEH…ELVG), 315–344 (NLYI…DIRQ), and 346–375 (LDAF…IINI).

This chain is Putative ankyrin repeat protein L797, found in Acanthamoeba polyphaga (Amoeba).